The following is a 214-amino-acid chain: Pyridoxine/pyridoxamine 5'-phosphate oxidase (214 aa).

Residues 8–11 (RINY) and lysine 66 contribute to the substrate site. Residues 61 to 66 (RIVLIK), 76 to 77 (FT), arginine 82, lysine 83, and glutamine 105 each bind FMN. Positions 123, 127, and 131 each coordinate substrate. FMN contacts are provided by residues 140–141 (QS) and tryptophan 184. 190 to 192 (RLH) is a binding site for substrate. FMN is bound at residue arginine 194.

It belongs to the pyridoxamine 5'-phosphate oxidase family. Homodimer. FMN serves as cofactor.

The catalysed reaction is pyridoxamine 5'-phosphate + O2 + H2O = pyridoxal 5'-phosphate + H2O2 + NH4(+). It carries out the reaction pyridoxine 5'-phosphate + O2 = pyridoxal 5'-phosphate + H2O2. Its pathway is cofactor metabolism; pyridoxal 5'-phosphate salvage; pyridoxal 5'-phosphate from pyridoxamine 5'-phosphate: step 1/1. It functions in the pathway cofactor metabolism; pyridoxal 5'-phosphate salvage; pyridoxal 5'-phosphate from pyridoxine 5'-phosphate: step 1/1. Its function is as follows. Catalyzes the oxidation of either pyridoxine 5'-phosphate (PNP) or pyridoxamine 5'-phosphate (PMP) into pyridoxal 5'-phosphate (PLP). This chain is Pyridoxine/pyridoxamine 5'-phosphate oxidase, found in Burkholderia cenocepacia (strain HI2424).